Consider the following 406-residue polypeptide: Protein IWS1 homolog 2 (406 aa).

2 disordered regions span residues 1-28 (MQEL…TGRR) and 41-89 (DEVE…SEEV). The span at 10 to 24 (EWVKELEGENEESKF) shows a compositional bias: basic and acidic residues. The span at 41-56 (DEVEEDLDDFTEPADD) shows a compositional bias: acidic residues. Residues 69–78 (KKDESGLEKT) show a composition bias toward basic and acidic residues. Residues 201–284 (NLLKNWLEPL…NKWGRIIYNK (84 aa)) enclose the TFIIS N-terminal domain.

This sequence belongs to the IWS1 family.

It localises to the nucleus. Functionally, transcription factor involved in RNA polymerase II (RNAPII) transcription regulation. Involved in transcription elongation. May function at post-recruitment and elongation steps of transcription. This Arabidopsis thaliana (Mouse-ear cress) protein is Protein IWS1 homolog 2.